The primary structure comprises 960 residues: CWF19-like protein 2 (960 aa).

Disordered regions lie at residues 1 to 222 (MAAY…AGVV), 261 to 552 (EFQK…ELIL), 624 to 648 (AWPV…AIET), and 712 to 731 (AQKE…AVQE). Residues 13–101 (SIKSRKESKR…KKAKKEKKDE (89 aa)) adopt a coiled-coil conformation. A compositionally biased stretch (basic and acidic residues) spans 16–52 (SRKESKREERERVIQKAKEKFEKEERRKAERKARGED). A compositionally biased stretch (basic residues) spans 73-96 (KTKKAKKEKKAKKSKKEKKKKAKK). The segment covering 108–117 (SSEDSEDEWV) has biased composition (acidic residues). The segment covering 135–146 (EATPSSSSASNN) has biased composition (low complexity). Positions 163–279 (SVADRRAQKE…EDAAYGERRD (117 aa)) form a coiled coil. Basic and acidic residues-rich tracts occupy residues 165-181 (ADRR…ERQK), 261-372 (EFQK…DDLS), and 404-417 (KPVD…EAGF). A compositionally biased stretch (polar residues) spans 507 to 518 (SAVQDSETPTLQ). The stretch at 540 to 605 (SESEEEEEEE…IKDQSKRASK (66 aa)) forms a coiled coil. The segment covering 541–552 (ESEEEEEEELIL) has biased composition (acidic residues). Residues 713–731 (QKERAGRDEERQRNKAVQE) show a composition bias toward basic and acidic residues.

It belongs to the CWF19 family.

This chain is CWF19-like protein 2 (cwf19l2), found in Danio rerio (Zebrafish).